We begin with the raw amino-acid sequence, 180 residues long: Alkyl hydroperoxide reductase AhpD (180 aa).

Cys131 (proton donor) is an active-site residue. The cysteines at positions 131 and 134 are disulfide-linked. Residue Cys134 is the Cysteine sulfenic acid (-SOH) intermediate of the active site.

This sequence belongs to the AhpD family.

It catalyses the reaction N(6)-[(R)-dihydrolipoyl]-L-lysyl-[lipoyl-carrier protein] + a hydroperoxide = N(6)-[(R)-lipoyl]-L-lysyl-[lipoyl-carrier protein] + an alcohol + H2O. Functionally, antioxidant protein with alkyl hydroperoxidase activity. Required for the reduction of the AhpC active site cysteine residues and for the regeneration of the AhpC enzyme activity. This is Alkyl hydroperoxide reductase AhpD from Hyphomonas neptunium (strain ATCC 15444).